The chain runs to 317 residues: Acetyl-coenzyme A carboxylase carboxyl transferase subunit beta (317 aa).

The tract at residues 1–28 (MANNMTDTMTKFDTNNDSASLQQNGNKA) is disordered. In terms of domain architecture, CoA carboxyltransferase N-terminal spans 55-317 (PSTKCSSCHS…LCSVPNVDAQ (263 aa)). Residues cysteine 59, cysteine 62, cysteine 78, and cysteine 81 each contribute to the Zn(2+) site. The segment at 59–81 (CSSCHSVITNTALIFNCYVCPHC) adopts a C4-type zinc-finger fold.

It belongs to the AccD/PCCB family. As to quaternary structure, acetyl-CoA carboxylase is a heterohexamer composed of biotin carboxyl carrier protein (AccB), biotin carboxylase (AccC) and two subunits each of ACCase subunit alpha (AccA) and ACCase subunit beta (AccD). The cofactor is Zn(2+).

The protein localises to the cytoplasm. It catalyses the reaction N(6)-carboxybiotinyl-L-lysyl-[protein] + acetyl-CoA = N(6)-biotinyl-L-lysyl-[protein] + malonyl-CoA. It functions in the pathway lipid metabolism; malonyl-CoA biosynthesis; malonyl-CoA from acetyl-CoA: step 1/1. Component of the acetyl coenzyme A carboxylase (ACC) complex. Biotin carboxylase (BC) catalyzes the carboxylation of biotin on its carrier protein (BCCP) and then the CO(2) group is transferred by the transcarboxylase to acetyl-CoA to form malonyl-CoA. The sequence is that of Acetyl-coenzyme A carboxylase carboxyl transferase subunit beta from Psychrobacter arcticus (strain DSM 17307 / VKM B-2377 / 273-4).